Here is a 1355-residue protein sequence, read N- to C-terminus: DNA-directed RNA polymerase subunit beta' (1355 aa).

Zn(2+) contacts are provided by Cys219, Cys293, Cys300, and Cys303. Residues 1331–1355 (AEVEVDDEVDDDYEDDDEDDDDYED) are disordered.

This sequence belongs to the RNA polymerase beta' chain family. RpoC2 subfamily. In terms of assembly, in cyanobacteria the RNAP catalytic core is composed of 2 alpha, 1 beta, 1 beta', 1 gamma and 1 omega subunit. When a sigma factor is associated with the core the holoenzyme is formed, which can initiate transcription. It depends on Zn(2+) as a cofactor.

It carries out the reaction RNA(n) + a ribonucleoside 5'-triphosphate = RNA(n+1) + diphosphate. In terms of biological role, DNA-dependent RNA polymerase catalyzes the transcription of DNA into RNA using the four ribonucleoside triphosphates as substrates. This chain is DNA-directed RNA polymerase subunit beta', found in Trichormus variabilis (strain ATCC 29413 / PCC 7937) (Anabaena variabilis).